Reading from the N-terminus, the 611-residue chain is Chaperone protein DnaK (611 aa).

Thr-173 is modified (phosphothreonine; by autocatalysis). Over residues 577–592 (QAAAGQAEGAEGAQDA) the composition is skewed to low complexity. A disordered region spans residues 577–598 (QAAAGQAEGAEGAQDAGAKKDN).

This sequence belongs to the heat shock protein 70 family.

Acts as a chaperone. The polypeptide is Chaperone protein DnaK (Bacillus anthracis (strain A0248)).